Consider the following 465-residue polypeptide: Putative mannose-1-phosphate guanylyltransferase (465 aa).

Belongs to the mannose-6-phosphate isomerase type 2 family.

The catalysed reaction is alpha-D-mannose 1-phosphate + GTP + H(+) = GDP-alpha-D-mannose + diphosphate. It participates in nucleotide-sugar biosynthesis; GDP-alpha-D-mannose biosynthesis; GDP-alpha-D-mannose from alpha-D-mannose 1-phosphate (GTP route): step 1/1. The protein operates within bacterial outer membrane biogenesis; LPS O-antigen biosynthesis. The polypeptide is Putative mannose-1-phosphate guanylyltransferase (rfbA) (Vibrio cholerae serotype O1 (strain ATCC 39315 / El Tor Inaba N16961)).